Consider the following 467-residue polypeptide: Nuclear distribution protein PAC1 (467 aa).

A coiled-coil region spans residues 62–96 (GSIIRLQRAITKLEQKCDALQQELDDKTKQLETIV). 7 WD repeats span residues 121-160 (QNES…IPLA), 164-212 (AHSK…GELK), 219-262 (AHDS…QSFS), 264-302 (HSEW…SVGT), 325-365 (PYRD…LKPN), 385-424 (GHTS…KTWS), and 426-466 (IHNN…VKII).

This sequence belongs to the WD repeat LIS1/nudF family. As to quaternary structure, self-associates. Interacts with NDL1 and dynein.

The protein resides in the cytoplasm. The protein localises to the cytoskeleton. It is found in the spindle pole. Functionally, positively regulates the activity of the minus-end directed microtubule motor protein dynein. Plays a central role in positioning the mitotic spindle at the bud neck during cell division. Targets cytoplasmic dynein to microtubule plus ends, thereby promoting dynein-mediated microtubule sliding along the bud cortex and consequently the movement of the mitotic spindle to the bud neck. This Candida glabrata (strain ATCC 2001 / BCRC 20586 / JCM 3761 / NBRC 0622 / NRRL Y-65 / CBS 138) (Yeast) protein is Nuclear distribution protein PAC1.